A 198-amino-acid chain; its full sequence is Large ribosomal subunit protein uL13B (198 aa).

Residue Ser-2 is modified to N-acetylserine; partial. Phosphoserine is present on Ser-43. Lys-176 participates in a covalent cross-link: Glycyl lysine isopeptide (Lys-Gly) (interchain with G-Cter in ubiquitin). 3 positions are modified to phosphoserine: Ser-181, Ser-185, and Ser-187.

The protein belongs to the universal ribosomal protein uL13 family. In terms of assembly, component of the large ribosomal subunit (LSU). Mature yeast ribosomes consist of a small (40S) and a large (60S) subunit. The 40S small subunit contains 1 molecule of ribosomal RNA (18S rRNA) and 33 different proteins (encoded by 57 genes). The large 60S subunit contains 3 rRNA molecules (25S, 5.8S and 5S rRNA) and 46 different proteins (encoded by 81 genes). N-terminally acetylated by acetyltransferase NatA.

The protein resides in the cytoplasm. Component of the ribosome, a large ribonucleoprotein complex responsible for the synthesis of proteins in the cell. The small ribosomal subunit (SSU) binds messenger RNAs (mRNAs) and translates the encoded message by selecting cognate aminoacyl-transfer RNA (tRNA) molecules. The large subunit (LSU) contains the ribosomal catalytic site termed the peptidyl transferase center (PTC), which catalyzes the formation of peptide bonds, thereby polymerizing the amino acids delivered by tRNAs into a polypeptide chain. The nascent polypeptides leave the ribosome through a tunnel in the LSU and interact with protein factors that function in enzymatic processing, targeting, and the membrane insertion of nascent chains at the exit of the ribosomal tunnel. The sequence is that of Large ribosomal subunit protein uL13B from Saccharomyces cerevisiae (strain ATCC 204508 / S288c) (Baker's yeast).